A 554-amino-acid chain; its full sequence is Methyl-CpG-binding domain protein 4 (554 aa).

The interval 1-23 (MESPNLGDNRVRGESLVPDPPWD) is disordered. Positions 63–135 (STTATEGHKP…EDFNFTVLPK (73 aa)) constitute an MBD domain. Over residues 154-164 (QPNETDVSKQN) the composition is skewed to polar residues. Disordered stretches follow at residues 154-195 (QPNE…SNSN) and 209-252 (DVDS…RKRA). Residues 178–195 (LPSGTSESPESSGLSNSN) show a composition bias toward low complexity. 2 positions are modified to phosphoserine: Ser-296 and Ser-402. Asp-534 is a catalytic residue.

Interacts with MLH1.

It localises to the nucleus. Functionally, mismatch-specific DNA N-glycosylase involved in DNA repair. Has thymine glycosylase activity and is specific for G:T mismatches within methylated and unmethylated CpG sites. Can also remove uracil or 5-fluorouracil in G:U mismatches. Has no lyase activity. Was first identified as methyl-CpG-binding protein. In Mus musculus (Mouse), this protein is Methyl-CpG-binding domain protein 4 (Mbd4).